A 503-amino-acid chain; its full sequence is Probable cytosol aminopeptidase (503 aa).

The Mn(2+) site is built by lysine 274 and aspartate 279. The active site involves lysine 286. Residues aspartate 297, aspartate 356, and glutamate 358 each coordinate Mn(2+). Arginine 360 is a catalytic residue.

It belongs to the peptidase M17 family. Mn(2+) is required as a cofactor.

The protein resides in the cytoplasm. It catalyses the reaction Release of an N-terminal amino acid, Xaa-|-Yaa-, in which Xaa is preferably Leu, but may be other amino acids including Pro although not Arg or Lys, and Yaa may be Pro. Amino acid amides and methyl esters are also readily hydrolyzed, but rates on arylamides are exceedingly low.. The catalysed reaction is Release of an N-terminal amino acid, preferentially leucine, but not glutamic or aspartic acids.. In terms of biological role, presumably involved in the processing and regular turnover of intracellular proteins. Catalyzes the removal of unsubstituted N-terminal amino acids from various peptides. This is Probable cytosol aminopeptidase from Burkholderia ambifaria (strain ATCC BAA-244 / DSM 16087 / CCUG 44356 / LMG 19182 / AMMD) (Burkholderia cepacia (strain AMMD)).